Consider the following 793-residue polypeptide: Phosphoribosylformylglycinamidine synthase subunit PurL (793 aa).

Histidine 53 is an active-site residue. Tyrosine 56 and lysine 95 together coordinate ATP. Residue glutamate 97 participates in Mg(2+) binding. Substrate contacts are provided by residues 98 to 101 and arginine 120; that span reads SHNH. Residue histidine 99 is the Proton acceptor of the active site. Residue aspartate 121 participates in Mg(2+) binding. Glutamine 244 is a substrate binding site. Aspartate 272 contacts Mg(2+). 316–318 contacts substrate; sequence ESQ. 2 residues coordinate ATP: aspartate 523 and glycine 560. Asparagine 561 provides a ligand contact to Mg(2+). Serine 563 lines the substrate pocket.

This sequence belongs to the FGAMS family. In terms of assembly, monomer. Part of the FGAM synthase complex composed of 1 PurL, 1 PurQ and 2 PurS subunits.

It is found in the cytoplasm. It catalyses the reaction N(2)-formyl-N(1)-(5-phospho-beta-D-ribosyl)glycinamide + L-glutamine + ATP + H2O = 2-formamido-N(1)-(5-O-phospho-beta-D-ribosyl)acetamidine + L-glutamate + ADP + phosphate + H(+). Its pathway is purine metabolism; IMP biosynthesis via de novo pathway; 5-amino-1-(5-phospho-D-ribosyl)imidazole from N(2)-formyl-N(1)-(5-phospho-D-ribosyl)glycinamide: step 1/2. Its function is as follows. Part of the phosphoribosylformylglycinamidine synthase complex involved in the purines biosynthetic pathway. Catalyzes the ATP-dependent conversion of formylglycinamide ribonucleotide (FGAR) and glutamine to yield formylglycinamidine ribonucleotide (FGAM) and glutamate. The FGAM synthase complex is composed of three subunits. PurQ produces an ammonia molecule by converting glutamine to glutamate. PurL transfers the ammonia molecule to FGAR to form FGAM in an ATP-dependent manner. PurS interacts with PurQ and PurL and is thought to assist in the transfer of the ammonia molecule from PurQ to PurL. The polypeptide is Phosphoribosylformylglycinamidine synthase subunit PurL (Prochlorococcus marinus (strain SARG / CCMP1375 / SS120)).